A 976-amino-acid polypeptide reads, in one-letter code: Leucine--tRNA ligase (976 aa).

Positions 1–23 (MTESPTTTPGSTSGAPSGVPSGV) are enriched in low complexity. Residues 1 to 34 (MTESPTTTPGSTSGAPSGVPSGVNDAESDAPRHR) form a disordered region. Residues 86–97 (PYPSGEGLHVGH) carry the 'HIGH' region motif. Positions 745-749 (KIGKS) match the 'KMSKS' region motif. Residue Lys748 coordinates ATP.

Belongs to the class-I aminoacyl-tRNA synthetase family.

Its subcellular location is the cytoplasm. The catalysed reaction is tRNA(Leu) + L-leucine + ATP = L-leucyl-tRNA(Leu) + AMP + diphosphate. This Mycobacterium marinum (strain ATCC BAA-535 / M) protein is Leucine--tRNA ligase.